Consider the following 127-residue polypeptide: Small ribosomal subunit protein uS11 (127 aa).

Belongs to the universal ribosomal protein uS11 family. In terms of assembly, part of the 30S ribosomal subunit. Interacts with proteins S7 and S18. Binds to IF-3.

Functionally, located on the platform of the 30S subunit, it bridges several disparate RNA helices of the 16S rRNA. Forms part of the Shine-Dalgarno cleft in the 70S ribosome. The protein is Small ribosomal subunit protein uS11 of Chlorobaculum tepidum (strain ATCC 49652 / DSM 12025 / NBRC 103806 / TLS) (Chlorobium tepidum).